A 77-amino-acid polypeptide reads, in one-letter code: UPF0401 protein ECP_3010 (77 aa).

Belongs to the UPF0401 family.

The chain is UPF0401 protein ECP_3010 from Escherichia coli O6:K15:H31 (strain 536 / UPEC).